A 239-amino-acid polypeptide reads, in one-letter code: Prolactin-8A4 (239 aa).

The first 31 residues, 1 to 31 (MMKLALSQPPFSGTLLMLVVSILLLWEKAAS), serve as a signal peptide directing secretion. 2 disulfides stabilise this stretch: Cys-35–Cys-42 and Cys-102–Cys-215. N-linked (GlcNAc...) asparagine glycans are attached at residues Asn-211 and Asn-218. Cys-232 and Cys-239 are disulfide-bonded.

Belongs to the somatotropin/prolactin family. Placental basal zone cells.

The protein localises to the secreted. The chain is Prolactin-8A4 (Prl8a4) from Rattus norvegicus (Rat).